A 506-amino-acid polypeptide reads, in one-letter code: Abscisic acid 8'-hydroxylase 2 (506 aa).

A helical membrane pass occupies residues 3-23 (FLLFFVFVTAAVLCFVVPAFL). C437 lines the heme pocket.

This sequence belongs to the cytochrome P450 family. Heme serves as cofactor. In internodes and expanding leaves. Weak expression in seedlings.

Its subcellular location is the membrane. The enzyme catalyses 2-cis-(+)-abscisate + reduced [NADPH--hemoprotein reductase] + O2 = (+)-8'-hydroxyabscisate + oxidized [NADPH--hemoprotein reductase] + H2O + H(+). It participates in plant hormone degradation; abscisic acid degradation. Involved in the oxidative degradation of abscisic acid. This chain is Abscisic acid 8'-hydroxylase 2 (CYP707A6), found in Oryza sativa subsp. indica (Rice).